The chain runs to 70 residues: MAFLKKSLFLVLFLGLVSLSICEKEKRQNEEDEDENEAANHEEGSEEKRGLFDIVKKIAGHIAGSIGKKR.

Positions 1-22 are cleaved as a signal peptide; the sequence is MAFLKKSLFLVLFLGLVSLSIC. The propeptide occupies 23–49; it reads EKEKRQNEEDEDENEAANHEEGSEEKR. The tract at residues 27–48 is disordered; the sequence is RQNEEDEDENEAANHEEGSEEK. Residues 38-48 are compositionally biased toward basic and acidic residues; it reads AANHEEGSEEK. Position 66 is an isoleucine amide (Ile-66).

In terms of tissue distribution, expressed by the skin dorsal glands.

It localises to the secreted. Its subcellular location is the target cell membrane. Amphipathic alpha-helical antimicrobial peptide with weak to potent activity against Gram-positive bacteria, and no activity against Gram-negative bacteria. Probably acts by disturbing membrane functions with its amphipathic structure. Shows anticancer activity. The sequence is that of Aurein-3.1 from Ranoidea aurea (Green and golden bell frog).